A 154-amino-acid polypeptide reads, in one-letter code: Myoglobin (154 aa).

The Globin domain occupies Gly2–Lys148. Position 4 is a phosphoserine (Ser4). Residue His65 coordinates nitrite. His65 is an O2 binding site. Phosphothreonine is present on Thr68. His94 lines the heme b pocket.

Belongs to the globin family. As to quaternary structure, monomeric.

It is found in the cytoplasm. The protein localises to the sarcoplasm. The enzyme catalyses Fe(III)-heme b-[protein] + nitric oxide + H2O = Fe(II)-heme b-[protein] + nitrite + 2 H(+). It carries out the reaction H2O2 + AH2 = A + 2 H2O. Functionally, monomeric heme protein which primary function is to store oxygen and facilitate its diffusion within muscle tissues. Reversibly binds oxygen through a pentacoordinated heme iron and enables its timely and efficient release as needed during periods of heightened demand. Depending on the oxidative conditions of tissues and cells, and in addition to its ability to bind oxygen, it also has a nitrite reductase activity whereby it regulates the production of bioactive nitric oxide. Under stress conditions, like hypoxia and anoxia, it also protects cells against reactive oxygen species thanks to its pseudoperoxidase activity. The sequence is that of Myoglobin (MB) from Halichoerus grypus (Gray seal).